The following is a 158-amino-acid chain: 6,7-dimethyl-8-ribityllumazine synthase (158 aa).

Residues Phe23, 61-63 (SME), and 85-87 (AVI) contribute to the 5-amino-6-(D-ribitylamino)uracil site. 90–91 (DT) is a binding site for (2S)-2-hydroxy-3-oxobutyl phosphate. His93 functions as the Proton donor in the catalytic mechanism. 5-amino-6-(D-ribitylamino)uracil is bound at residue Tyr118. Arg132 lines the (2S)-2-hydroxy-3-oxobutyl phosphate pocket.

The protein belongs to the DMRL synthase family.

The enzyme catalyses (2S)-2-hydroxy-3-oxobutyl phosphate + 5-amino-6-(D-ribitylamino)uracil = 6,7-dimethyl-8-(1-D-ribityl)lumazine + phosphate + 2 H2O + H(+). It participates in cofactor biosynthesis; riboflavin biosynthesis; riboflavin from 2-hydroxy-3-oxobutyl phosphate and 5-amino-6-(D-ribitylamino)uracil: step 1/2. Functionally, catalyzes the formation of 6,7-dimethyl-8-ribityllumazine by condensation of 5-amino-6-(D-ribitylamino)uracil with 3,4-dihydroxy-2-butanone 4-phosphate. This is the penultimate step in the biosynthesis of riboflavin. This is 6,7-dimethyl-8-ribityllumazine synthase from Prochlorococcus marinus (strain MIT 9211).